The sequence spans 400 residues: Egl nine homolog 1 (400 aa).

Position 2 is an N-acetylalanine (A2). Residues 6–20 form a required for nuclear export region; the sequence is GGPGVLSASERDRQY. S12 carries the post-translational modification Phosphoserine. Residues C21, C24, C33, C36, C42, H46, H54, and C58 each contribute to the Zn(2+) site. The MYND-type; atypical zinc finger occupies 21–58; the sequence is CELCGKMENLLRCGRCRSSFYCCKEHQRQDWKKHKLVC. The span at 62 to 74 shows a compositional bias: low complexity; it reads EAPRAQPAPAQPR. A disordered region spans residues 62-161; the sequence is EAPRAQPAPA…PGGGLRPNGQ (100 aa). The residue at position 114 (S114) is a Phosphoserine. The segment covering 142–157 has biased composition (gly residues); it reads AGGGPGEALSPGGGLR. C178 and C185 each carry S-nitrosocysteine. The beta(2)beta(3) 'finger-like' loop stretch occupies residues 218-228; that stretch reads VSQKSDSSKDI. In terms of domain architecture, Fe2OG dioxygenase spans 271-369; the sequence is GRTKAMVACY…RYAITVWYFD (99 aa). C279 is modified (S-nitrosocysteine). H290 and D292 together coordinate Fe cation. C300 and C303 each carry S-nitrosocysteine. H351 contacts Fe cation. R360 contacts 2-oxoglutarate.

In terms of assembly, monomer. Interacts with ING4; the interaction inhibits the hydroxylation of HIF alpha proteins. Interacts with PTGES3 (via PXLE motif); thereby recruiting EGLN1 to the HSP90 pathway to facilitate HIF alpha proteins hydroxylation. Interacts with LIMD1. Found in a complex composed of LIMD1, VHL, EGLN1/PHD2, ELOB and CUL2. Interacts with EPAS1. Interacts with CBFA2T3 and HIF1A. Fe(2+) is required as a cofactor. It depends on L-ascorbate as a cofactor. S-nitrosylation inhibits the enzyme activity up to 60% under aerobic conditions. Chelation of Fe(2+) has no effect on the S-nitrosylation. It is uncertain whether nitrosylation occurs on Cys-300 or Cys-303. In terms of tissue distribution, expressed in heart, brain liver, skeletal muscle and kidney. Low levels were detected in the lung. Constitutively expressed during differentiation of C2C12 skeletal myocytes.

It localises to the cytoplasm. The protein resides in the nucleus. It catalyses the reaction L-prolyl-[hypoxia-inducible factor alpha subunit] + 2-oxoglutarate + O2 = trans-4-hydroxy-L-prolyl-[hypoxia-inducible factor alpha subunit] + succinate + CO2. Cellular oxygen sensor that catalyzes, under normoxic conditions, the post-translational formation of 4-hydroxyproline in hypoxia-inducible factor (HIF) alpha proteins. Hydroxylates a specific proline found in each of the oxygen-dependent degradation (ODD) domains (N-terminal, NODD, and C-terminal, CODD) of HIF1A. Also hydroxylates HIF2A. Has a preference for the CODD site for both HIF1A and HIF1B. Hydroxylated HIFs are then targeted for proteasomal degradation via the von Hippel-Lindau ubiquitination complex. Under hypoxic conditions, the hydroxylation reaction is attenuated allowing HIFs to escape degradation resulting in their translocation to the nucleus, heterodimerization with HIF1B, and increased expression of hypoxy-inducible genes. EGLN1 is the most important isozyme under normoxia and, through regulating the stability of HIF1, involved in various hypoxia-influenced processes such as angiogenesis in retinal and cardiac functionality. Target proteins are preferentially recognized via a LXXLAP motif. This chain is Egl nine homolog 1 (Egln1), found in Mus musculus (Mouse).